Consider the following 282-residue polypeptide: DNA processing protein DprA (282 aa).

This sequence belongs to the DprA/Smf family. As to quaternary structure, homodimer; forms tail-to-tail dimers, forms nucleoprotein complex (NPC) which requires at least 30 nucleotides (nt) of ssDNA becoming optimal with 50 nt. Interacts with RecA, forms mixed DprA-RecA-ssDNA filaments. Interacts with ComFA and ComFC.

The protein localises to the cytoplasm. Protein that helps load RecA onto ssDNA during transformation. Required for DNA transformation. Not required for DNA uptake but for a later stage of transformation. Thought to interact at the cell pole with newly imported transforming ssDNA which it binds cooperatively, protecting linear and circular ssDNA from nuclease action. Forms bridges between DNA segments. Favors the loading of RecA onto ssDNA and formation of RecA-DNA filaments, triggering RecA-catalysis of ATP-driven homologous DNA pairing. The chain is DNA processing protein DprA from Streptococcus pneumoniae (strain ATCC BAA-255 / R6).